A 180-amino-acid polypeptide reads, in one-letter code: ATP synthase subunit delta, chloroplastic (180 aa).

Belongs to the ATPase delta chain family. F-type ATPases have 2 components, F(1) - the catalytic core - and F(0) - the membrane proton channel. F(1) has five subunits: alpha(3), beta(3), gamma(1), delta(1), epsilon(1). CF(0) has four main subunits: a(1), b(1), b'(1) and c(10-14). The alpha and beta chains form an alternating ring which encloses part of the gamma chain. F(1) is attached to F(0) by a central stalk formed by the gamma and epsilon chains, while a peripheral stalk is formed by the delta, b and b' chains.

It is found in the plastid. It localises to the chloroplast thylakoid membrane. Its function is as follows. F(1)F(0) ATP synthase produces ATP from ADP in the presence of a proton or sodium gradient. F-type ATPases consist of two structural domains, F(1) containing the extramembraneous catalytic core and F(0) containing the membrane proton channel, linked together by a central stalk and a peripheral stalk. During catalysis, ATP synthesis in the catalytic domain of F(1) is coupled via a rotary mechanism of the central stalk subunits to proton translocation. Functionally, this protein is part of the stalk that links CF(0) to CF(1). It either transmits conformational changes from CF(0) to CF(1) or is implicated in proton conduction. The polypeptide is ATP synthase subunit delta, chloroplastic (Emiliania huxleyi (Coccolithophore)).